The primary structure comprises 1415 residues: MKALLDLFKQVQQEEQFDAIKIGLASPEKIRSWSYGEVKKPETINYRTFKPERDGLFCAKIFGPIKDYECLCGKYKRLKHRGVICEKCGVEVTLAKVRRERMGHIELAAPTAHIWFLKSLPSRLGMVLDMTLRDIERVLYFEAFVVIEPGMTPLKKSQIMSEDDYLAKCDEYGEGEFVAMMGAEGIRELLRGIDIEKQIEQIRAELQATGSEAKIKKFAKRLKVLEAFQRSGIKPEWMILEVLPVLPPELRPLVPLDGGRFATSDLNDLYRRVINRNNRLKRLLELKAPEIIVRNEKRMLQEAVDSLLDNGRRGKAMTGANKRPLKSLAEMIKGKGGRFRQNLLGKRVDYSGRSVIVVGPTLKLHQCGLPKLMALELFKPFIFHKLETMGIATTIKAAKKEVESQTPVVWDILEEVIREHPVMLNRAPTLHRLGIQAFEPVLIEGKAIQLHPLVCAAFNADFDGDQMAVHVPLSLEAQMEARTLMLASNNVLFPANGDPSIVPSQDVVLGLYYTTRDKINGRGEGMTFADISEVIRAYENKEVELASRVNVRITEYELVDKDAEGDARFAPKITLQATTVGRAILSEILPKGLPFSVLNKPLKKKEISRLINTAFRKCGLRETVIFADKLLQSGFRLATRAGISIAIDDMLVPPQKEKIIAEASAKVKEYDKQYMSGLVTDQERYNNVVDIWGAAGDQVGKAMMEQLQHEDVVDREGKTVKQESFNSIYMMADSGARGSAAQIRQLAGMRGLMAKPDGSIIETPITANFREGLNVLQYFISTHGARKGLADTALKTANSGYLTRRLVDVTQDLVVVEDDCGTSNGVAMKALVEGGEVIEALRDRILGRVTVADVVNPETQETAIEAGTLLDEDLVELIDNIGVDEVKVRTPLSCDTRYGLCGKCYGRDLGRGVLVNSGEAVGVIAAQSIGEPGTQLTMRTFHIGGAASRAAVASSVEAKATGTVRFTATMRYVTNAKGELIVISRSGEALITDDHGRERERHKIPYGATLLVQDGQAIKAGTQLATWDALTRPIVSEYTGTTKFENVEEGVTVAKQMDEVTGLSTLVVIDAKRRTAATKGIRPQVKLLDANGQEVKIPGTDHSVTIGFQVGALITVKDGQQVHVGEVLARIPTESQKTRDITGGLPRVAELFEARSPKDAAVLAEVTGTTSFGKDTKGKQRLVITDLDGNAHEFLIAKEKQVLVHDGQVVNKGEMIVEGPADPHDILRLKGIEELAHYIVDEVQDVYRLQGVKINDKHIEVIVRQMLRRVQIADVGDTKFIPGEQVERSELLDENDRVIAEGKRPATYENLLLGITKASLSTDSFISAASFQETTRVLTEAAIMGKTDDLRGLKENVIVGRLIPAGTGLAYHRARKAREASERERAQAIAEEEQSLFIEPAPVVQATTEGEGDNA.

Positions 70, 72, 85, and 88 each coordinate Zn(2+). Residues D461, D463, and D465 each coordinate Mg(2+). 4 residues coordinate Zn(2+): C820, C894, C901, and C904.

Belongs to the RNA polymerase beta' chain family. In terms of assembly, the RNAP catalytic core consists of 2 alpha, 1 beta, 1 beta' and 1 omega subunit. When a sigma factor is associated with the core the holoenzyme is formed, which can initiate transcription. It depends on Mg(2+) as a cofactor. The cofactor is Zn(2+).

It catalyses the reaction RNA(n) + a ribonucleoside 5'-triphosphate = RNA(n+1) + diphosphate. In terms of biological role, DNA-dependent RNA polymerase catalyzes the transcription of DNA into RNA using the four ribonucleoside triphosphates as substrates. This chain is DNA-directed RNA polymerase subunit beta', found in Cupriavidus necator (strain ATCC 17699 / DSM 428 / KCTC 22496 / NCIMB 10442 / H16 / Stanier 337) (Ralstonia eutropha).